Reading from the N-terminus, the 266-residue chain is GTP cyclohydrolase III (266 aa).

The protein belongs to the archaeal-type GTP cyclohydrolase family.

The catalysed reaction is GTP + 3 H2O = 2-amino-5-formylamino-6-(5-phospho-D-ribosylamino)pyrimidin-4(3H)-one + 2 phosphate + 2 H(+). Its function is as follows. Catalyzes the formation of 2-amino-5-formylamino-6-ribofuranosylamino-4(3H)-pyrimidinone ribonucleotide monophosphate and inorganic phosphate from GTP. Also has an independent pyrophosphate phosphohydrolase activity. The chain is GTP cyclohydrolase III from Methanococcus vannielii (strain ATCC 35089 / DSM 1224 / JCM 13029 / OCM 148 / SB).